Reading from the N-terminus, the 284-residue chain is 2-dehydro-3-deoxyphosphooctonate aldolase (284 aa).

This sequence belongs to the KdsA family.

The protein resides in the cytoplasm. The catalysed reaction is D-arabinose 5-phosphate + phosphoenolpyruvate + H2O = 3-deoxy-alpha-D-manno-2-octulosonate-8-phosphate + phosphate. It functions in the pathway carbohydrate biosynthesis; 3-deoxy-D-manno-octulosonate biosynthesis; 3-deoxy-D-manno-octulosonate from D-ribulose 5-phosphate: step 2/3. The protein operates within bacterial outer membrane biogenesis; lipopolysaccharide biosynthesis. The chain is 2-dehydro-3-deoxyphosphooctonate aldolase from Serratia proteamaculans (strain 568).